The primary structure comprises 301 residues: Chitin deacetylase 1 (301 aa).

The signal sequence occupies residues 1 to 24 (MKIFNTIQSVLFAAFFLKQGNCLA). N-linked (GlcNAc...) asparagine glycosylation is found at Asn26, Asn50, and Asn68. Residues Cys107 and Cys290 are joined by a disulfide bond. Residues 108–288 (FKLSQTFDDG…LIGSDQLTIA (181 aa)) enclose the NodB homology domain. The Proton acceptor role is filled by Asp115. Asp115 serves as a coordination point for acetate. Asp116, His162, and His166 together coordinate Co(2+). Asn189 carries an N-linked (GlcNAc...) asparagine glycan. Tyr203 contributes to the acetate binding site. His263 acts as the Proton donor in catalysis.

It belongs to the polysaccharide deacetylase family. Co(2+) is required as a cofactor.

Its subcellular location is the prospore. It carries out the reaction [(1-&gt;4)-N-acetyl-beta-D-glucosaminyl](n) + n H2O = chitosan + n acetate. Its function is as follows. Hydrolyzes the N-acetamido groups of N-acetyl-D-glucosamine residues in chitin to form chitosan and acetate. Chitosan is a component of the spore wall. This chain is Chitin deacetylase 1, found in Saccharomyces cerevisiae (strain ATCC 204508 / S288c) (Baker's yeast).